Here is a 371-residue protein sequence, read N- to C-terminus: Cytochrome b (371 aa).

The next 4 helical transmembrane spans lie at 25–45 (FGSM…FLAV), 69–90 (WLMQ…YTHI), 105–125 (WLSG…GYVL), and 170–190 (FFAL…LHIM). The heme b site is built by His-75 and His-89. Heme b contacts are provided by His-174 and His-188. A ubiquinone is bound at residue His-193. 4 helical membrane-spanning segments follow: residues 218–238 (YKDM…VAFF), 280–300 (LGGA…PFTH), 312–332 (IMQF…WAAT), and 339–358 (FTAI…ITNP).

Belongs to the cytochrome b family. The cytochrome bc1 complex contains 3 respiratory subunits (MT-CYB, CYC1 and UQCRFS1), 2 core proteins (UQCRC1 and UQCRC2) and probably 6 low-molecular weight proteins. Requires heme b as cofactor.

The protein resides in the mitochondrion inner membrane. Its function is as follows. Component of the ubiquinol-cytochrome c reductase complex (complex III or cytochrome b-c1 complex) that is part of the mitochondrial respiratory chain. The b-c1 complex mediates electron transfer from ubiquinol to cytochrome c. Contributes to the generation of a proton gradient across the mitochondrial membrane that is then used for ATP synthesis. This chain is Cytochrome b (MT-CYB), found in Eryx colubrinus loveridgei.